Consider the following 481-residue polypeptide: Glutamyl-tRNA(Gln) amidotransferase subunit A (481 aa).

Active-site charge relay system residues include Lys-76 and Ser-151. The active-site Acyl-ester intermediate is the Ser-175.

The protein belongs to the amidase family. GatA subfamily. As to quaternary structure, heterotrimer of A, B and C subunits.

The enzyme catalyses L-glutamyl-tRNA(Gln) + L-glutamine + ATP + H2O = L-glutaminyl-tRNA(Gln) + L-glutamate + ADP + phosphate + H(+). In terms of biological role, allows the formation of correctly charged Gln-tRNA(Gln) through the transamidation of misacylated Glu-tRNA(Gln) in organisms which lack glutaminyl-tRNA synthetase. The reaction takes place in the presence of glutamine and ATP through an activated gamma-phospho-Glu-tRNA(Gln). The sequence is that of Glutamyl-tRNA(Gln) amidotransferase subunit A from Chlorobaculum parvum (strain DSM 263 / NCIMB 8327) (Chlorobium vibrioforme subsp. thiosulfatophilum).